Reading from the N-terminus, the 400-residue chain is MNSLRSVKRLLGARSLSSDGLSESVNSSDREDSLSFQTPSTPSEDEMPQCFEDLIKPQVLSSEASKSLLSLNEGIKMEIVSSLQQKDQKKRNKLIAWMRKKPCYEQPDDFISYIVNTKIDSIDESIIHKLALLLRNEQVIWVEKFIHNGGFGVVFCTIDKISRLEWREELHDSILEQLLLCVKAMCTVQRGLECLSQSTYNVERLISLLLSKKQPCDFVVREVLVQIVHSFYKAHLDKEEGAMQVFSLFSIKDDKDEEVEFLKNVRVDRPFRRWIIELEDVSRNVFWVWNHDSNVIDLEKQYNQVYEAPLGFIGGIETEATSYVAAHIHLINELLEGLPLEKRQRKRLELQLSGLERIMGLRFRKSSQKFHKKLHEALREWIVAAKIDDWPYKLVQTGST.

A compositionally biased stretch (polar residues) spans L16–S27. A disordered region spans residues L16–M47. A GBD/FH3 domain is found at P39–T400.

The protein localises to the cytoplasm. This chain is GTPase-binding protein rid1 (rid1), found in Schizosaccharomyces pombe (strain 972 / ATCC 24843) (Fission yeast).